The chain runs to 245 residues: Precorrin-2 C(20)-methyltransferase (245 aa).

This sequence belongs to the precorrin methyltransferase family. Homodimer.

It catalyses the reaction precorrin-2 + S-adenosyl-L-methionine = precorrin-3A + S-adenosyl-L-homocysteine + H(+). The protein operates within cofactor biosynthesis; adenosylcobalamin biosynthesis; cob(II)yrinate a,c-diamide from precorrin-2 (aerobic route): step 1/10. Methylates precorrin-2 at the C-20 position to produce precorrin-3A. The chain is Precorrin-2 C(20)-methyltransferase (cobI) from Sinorhizobium sp.